The following is a 181-amino-acid chain: HGPRTase-like protein 1 (181 aa).

It belongs to the purine/pyrimidine phosphoribosyltransferase family. Archaeal HPRT subfamily.

In terms of biological role, may catalyze a purine salvage reaction, the substrate is unknown. This chain is HGPRTase-like protein 1, found in Halalkalicoccus jeotgali (strain DSM 18796 / CECT 7217 / JCM 14584 / KCTC 4019 / B3).